We begin with the raw amino-acid sequence, 1406 residues long: Inactive tyrosine-protein kinase PRAG1 (1406 aa).

Residue S148 is modified to Phosphoserine. The segment covering 184 to 193 has biased composition (basic and acidic residues); the sequence is EEKAVHKEKP. Disordered regions lie at residues 184 to 205 and 217 to 248; these read EEKA…STQE and TTSG…SGDS. A phosphotyrosine mark is found at Y253, Y365, and Y413. Disordered stretches follow at residues 372-470 and 484-854; these read PAPE…TPQV and DHRT…HSET. Basic and acidic residues predominate over residues 526 to 542; the sequence is RESHAHSASESKPKERP. A compositionally biased stretch (low complexity) spans 546–576; the sequence is PKLSKSSPVGSPVSPSAGGPPVSPLADLSDG. Composition is skewed to polar residues over residues 660-671 and 678-695; these read NGPTDHSNSTTW and DGSS…SKSA. 2 positions are modified to phosphoserine: S696 and S745. Composition is skewed to polar residues over residues 737 to 746 and 754 to 770; these read SQGSAESLSP and SFTT…SRTC. The residue at position 782 (S782) is a Phosphoserine. Positions 798-808 are enriched in polar residues; it reads SGSTEDVSPSG. S826 carries the phosphoserine modification. The required for homodimerization stretch occupies residues 933-976; the sequence is STQLQLHGLLSNISSKEGTYAKLGGLYTQSLARLVAKCEDLFMG. The Protein kinase domain occupies 978-1329; the sequence is QKKELHFNEN…EAKRVLQCLL (352 aa). Over residues 1163–1173 the composition is skewed to pro residues; sequence GPAPAPAPAPA. The segment at 1163-1206 is disordered; that stretch reads GPAPAPAPAPAPAAAAPPCSSAAPPAGGTLSPAAGPASPEGPRE. The segment covering 1174–1202 has biased composition (low complexity); the sequence is PAAAAPPCSSAAPPAGGTLSPAAGPASPE. The tract at residues 1331–1406 is required for homodimerization; sequence GPRRELVQQP…LQSLKLLQLL (76 aa).

It belongs to the protein kinase superfamily. As to quaternary structure, homodimer. Dimerization leads to the catalytic activation of CSK. Interacts (via C-terminus) with RND2. Interacts with CSK (via SH2 domain) in a Tyr-413 phosphorylation-dependent manner; this interaction potentiates kinase activity of CSK. Interacts with PEAK1. Interacts with NOTCH1 intracellular domain (N1ICD). Forms a complex with N1ICD and MAML1, in a MAML1-dependent manner. Post-translationally, phosphorylated by CSK on Tyr-253, Tyr-365, and Tyr-413; Tyr-413 is a primary site of phosphorylation.

Its subcellular location is the cytoplasm. The protein localises to the cell junction. It localises to the focal adhesion. It is found in the nucleus. Functionally, catalytically inactive protein kinase that acts as a scaffold protein. Functions as an effector of the small GTPase RND2, which stimulates RhoA activity and inhibits NGF-induced neurite outgrowth. Promotes Src family kinase (SFK) signaling by regulating the subcellular localization of CSK, a negative regulator of these kinases, leading to the regulation of cell morphology and motility by a CSK-dependent mechanism. Acts as a critical coactivator of Notch signaling. The sequence is that of Inactive tyrosine-protein kinase PRAG1 from Homo sapiens (Human).